The primary structure comprises 138 residues: Small ribosomal subunit protein uS11c (138 aa).

The disordered stretch occupies residues 1–22 (MTKPIPRIGSRRNGRIGSRKNA). The span at 9-22 (GSRRNGRIGSRKNA) shows a compositional bias: basic residues.

The protein belongs to the universal ribosomal protein uS11 family. As to quaternary structure, part of the 30S ribosomal subunit.

It is found in the plastid. It localises to the chloroplast. The sequence is that of Small ribosomal subunit protein uS11c from Dioscorea elephantipes (Elephant's foot yam).